The sequence spans 110 residues: Large ribosomal subunit protein uL22 (110 aa).

It belongs to the universal ribosomal protein uL22 family. As to quaternary structure, part of the 50S ribosomal subunit.

Its function is as follows. This protein binds specifically to 23S rRNA; its binding is stimulated by other ribosomal proteins, e.g. L4, L17, and L20. It is important during the early stages of 50S assembly. It makes multiple contacts with different domains of the 23S rRNA in the assembled 50S subunit and ribosome. The globular domain of the protein is located near the polypeptide exit tunnel on the outside of the subunit, while an extended beta-hairpin is found that lines the wall of the exit tunnel in the center of the 70S ribosome. The polypeptide is Large ribosomal subunit protein uL22 (Pectobacterium atrosepticum (strain SCRI 1043 / ATCC BAA-672) (Erwinia carotovora subsp. atroseptica)).